Reading from the N-terminus, the 273-residue chain is Dermonecrotic toxin LruSicTox-alphaIC1a (273 aa).

Histidine 5 is an active-site residue. Residues glutamate 25 and aspartate 27 each contribute to the Mg(2+) site. The Nucleophile role is filled by histidine 41. 2 disulfides stabilise this stretch: cysteine 45/cysteine 51 and cysteine 47/cysteine 190. Residue aspartate 85 participates in Mg(2+) binding.

Belongs to the arthropod phospholipase D family. Class II subfamily. Requires Mg(2+) as cofactor. As to expression, expressed by the venom gland.

It localises to the secreted. It carries out the reaction an N-(acyl)-sphingosylphosphocholine = an N-(acyl)-sphingosyl-1,3-cyclic phosphate + choline. The enzyme catalyses an N-(acyl)-sphingosylphosphoethanolamine = an N-(acyl)-sphingosyl-1,3-cyclic phosphate + ethanolamine. The catalysed reaction is a 1-acyl-sn-glycero-3-phosphocholine = a 1-acyl-sn-glycero-2,3-cyclic phosphate + choline. It catalyses the reaction a 1-acyl-sn-glycero-3-phosphoethanolamine = a 1-acyl-sn-glycero-2,3-cyclic phosphate + ethanolamine. Dermonecrotic toxins cleave the phosphodiester linkage between the phosphate and headgroup of certain phospholipids (sphingolipid and lysolipid substrates), forming an alcohol (often choline) and a cyclic phosphate. This toxin acts on sphingomyelin (SM). It may also act on ceramide phosphoethanolamine (CPE), lysophosphatidylcholine (LPC) and lysophosphatidylethanolamine (LPE), but not on lysophosphatidylserine (LPS), and lysophosphatidylglycerol (LPG). It acts by transphosphatidylation, releasing exclusively cyclic phosphate products as second products. Induces dermonecrosis, hemolysis, increased vascular permeability, edema, inflammatory response, and platelet aggregation. The chain is Dermonecrotic toxin LruSicTox-alphaIC1a from Loxosceles rufescens (Mediterranean recluse spider).